The sequence spans 684 residues: PAN2-PAN3 deadenylation complex subunit PAN3 (684 aa).

Disordered stretches follow at residues 1-38 (MLPPPKSAAVQIVRPPSPSSEKAKEKEKKHSPEKRETA), 68-97 (DPSTPQNSSPVAHAPTPSAPTPLAGTPARE), and 112-146 (VPKGLDSSPRASTPSVPTPSAPTPPVWPSLPSTGL). A compositionally biased stretch (basic and acidic residues) spans 21-38 (EKAKEKEKKHSPEKRETA). The segment at 36–65 (ETAQRICRNVMIYGYCKYQDQGCIYYHPPA) adopts a C3H1-type zinc-finger fold. Positions 127 to 139 (VPTPSAPTPPVWP) are enriched in pro residues. The interval 263-544 (GANGASAPGL…SIDEVVKMMG (282 aa)) is pseudokinase domain. ATP-binding positions include Arg326 and 375 to 382 (DYHPLSTT). A disordered region spans residues 387 to 412 (YLSPNPPEPSPASALANQPPKRRSSP). 444–445 (SK) serves as a coordination point for ATP. The stretch at 545-583 (PRILNELDAVQSYADVLENELGAEVENGRIVRLLTKLGF) forms a coiled coil. Residues 584–684 (INERAEFELD…NAGNNHRVHR (101 aa)) are knob domain.

This sequence belongs to the protein kinase superfamily. PAN3 family. As to quaternary structure, homodimer. Forms a heterotrimer with a catalytic subunit PAN2 to form the poly(A)-nuclease (PAN) deadenylation complex. Interacts (via PAM-2 motif) with poly(A)-binding protein PAB1 (via PABC domain), conferring substrate specificity of the enzyme complex.

Its subcellular location is the cytoplasm. Its function is as follows. Regulatory subunit of the poly(A)-nuclease (PAN) deadenylation complex, one of two cytoplasmic mRNA deadenylases involved in mRNA turnover. PAN specifically shortens poly(A) tails of RNA and the activity is stimulated by poly(A)-binding protein PAB1. PAN deadenylation is followed by rapid degradation of the shortened mRNA tails by the CCR4-NOT complex. Deadenylated mRNAs are then degraded by two alternative mechanisms, namely exosome-mediated 3'-5' exonucleolytic degradation, or deadenylation-dependent mRNA decaping and subsequent 5'-3' exonucleolytic degradation by XRN1. May also be involved in post-transcriptional maturation of mRNA poly(A) tails. PAN3 acts as a positive regulator for PAN activity, recruiting the catalytic subunit PAN2 to mRNA via its interaction with RNA and with PAB1. The sequence is that of PAN2-PAN3 deadenylation complex subunit PAN3 from Cryptococcus neoformans var. neoformans serotype D (strain B-3501A) (Filobasidiella neoformans).